Here is a 320-residue protein sequence, read N- to C-terminus: Thiamine thiazole synthase (320 aa).

Substrate is bound by residues cysteine 82, 103–104 (EA), glycine 111, and valine 176. Position 209 is a 2,3-didehydroalanine (Cys) (cysteine 209). Substrate contacts are provided by residues aspartate 211, histidine 226, methionine 278, and 288 to 290 (RMG).

This sequence belongs to the THI4 family. As to quaternary structure, homooctamer. Fe cation serves as cofactor. In terms of processing, during the catalytic reaction, a sulfide is transferred from Cys-209 to a reaction intermediate, generating a dehydroalanine residue.

It localises to the cytoplasm. The protein localises to the nucleus. It catalyses the reaction [ADP-thiazole synthase]-L-cysteine + glycine + NAD(+) = [ADP-thiazole synthase]-dehydroalanine + ADP-5-ethyl-4-methylthiazole-2-carboxylate + nicotinamide + 3 H2O + 2 H(+). Its function is as follows. Involved in biosynthesis of the thiamine precursor thiazole. Catalyzes the conversion of NAD and glycine to adenosine diphosphate 5-(2-hydroxyethyl)-4-methylthiazole-2-carboxylic acid (ADT), an adenylated thiazole intermediate. The reaction includes an iron-dependent sulfide transfer from a conserved cysteine residue of the protein to a thiazole intermediate. The enzyme can only undergo a single turnover, which suggests it is a suicide enzyme. May have additional roles in adaptation to various stress conditions and in DNA damage tolerance. This Fusarium oxysporum f. sp. lycopersici (strain 4287 / CBS 123668 / FGSC 9935 / NRRL 34936) (Fusarium vascular wilt of tomato) protein is Thiamine thiazole synthase (sti35).